A 473-amino-acid polypeptide reads, in one-letter code: Reticulon-4 receptor (473 aa).

A signal peptide spans 1 to 26 (MKRASSGGSRLLAWVLWLQAWRVATP). 2 disulfides stabilise this stretch: Cys27/Cys33 and Cys31/Cys43. Positions 27–57 (CPGACVCYNEPKVTTSCPQQGLQAVPTGIPA) constitute an LRRNT domain. LRR repeat units follow at residues 56 to 79 (PASSQRIFLHGNRISYVPAASFQS), 80 to 103 (CRNLTILWLHSNALAGIDAAAFTG), 105 to 128 (TLLEQLDLSDNAQLRVVDPTTFRG), 129 to 152 (LGHLHTLHLDRCGLQELGPGLFRG), 153 to 176 (LAALQYLYLQDNNLQALPDNTFRD), 178 to 200 (GNLTHLFLHGNRIPSVPEHAFRG), 202 to 224 (HSLDRLLLHQNHVARVHPHAFRD), 225 to 248 (LGRLMTLYLFANNLSMLPAEVLVP), and 250 to 273 (RSLQYLRLNDNPWVCDCRARPLWA). N-linked (GlcNAc...) asparagine glycosylation is present at Asn82. The LRRCT domain maps to 260 to 310 (NPWVCDCRARPLWAWLQKFRGSSSEVPCNLPQRLAGRDLKRLAASDLEGCA). Disulfide bonds link Cys264–Cys287, Cys266–Cys335, and Cys309–Cys336. Residues 346–446 (VLEPGRPASA…GSSGTGDAEG (101 aa)) are disordered. Residue Asn372 is glycosylated (N-linked (GlcNAc...) asparagine). Positions 413–429 (PRRRPGCSRKNRTRSHC) are enriched in basic residues. Residues 434-445 (AGSGSSGTGDAE) are compositionally biased toward gly residues. Ser447 carries the GPI-anchor amidated serine lipid modification. Positions 448-473 (GALPALACSLAPLGLALVLWTVLGPC) are cleaved as a propeptide — removed in mature form.

It belongs to the Nogo receptor family. Homodimer. Interacts with MAG. Interacts with RTN4 and OMG. Interacts with LINGO1 and NGFR. Interacts with KIAA0319L. Interacts with OLFM1; this inhibits interaction with LINGO1 and NGFR. In terms of processing, N-glycosylated. O-glycosylated. Contains terminal sialic acid groups on its glycan chains. As to expression, detected in embryonic cerebellum, in spinal cord motor neurons and in dorsal root ganglia. Detected in adult brain, in neocortex, hippocampus, striatum, thalamus and dorsal root ganglion neurons (at protein level).

Its subcellular location is the cell membrane. It is found in the membrane raft. The protein resides in the cell projection. It localises to the dendrite. The protein localises to the perikaryon. Its subcellular location is the axon. Functionally, receptor for RTN4, OMG and MAG. Functions as a receptor for the sialylated gangliosides GT1b and GM1. Besides, functions as a receptor for chondroitin sulfate proteoglycans. Can also bind heparin. Intracellular signaling cascades are triggered via the coreceptor NGFR. Signaling mediates activation of Rho and downstream reorganization of the actin cytoskeleton. Mediates axonal growth inhibition. May play a role in regulating axon regeneration and neuronal plasticity in the adult central nervous system. Plays a role in postnatal brain development. Required for normal axon migration across the brain midline and normal formation of the corpus callosum. Protects motoneurons against apoptosis; protection against apoptosis is probably mediated via interaction with MAG. Acts in conjunction with RTN4 and LINGO1 in regulating neuronal precursor cell motility during cortical development. Like other family members, plays a role in restricting the number dendritic spines and the number of synapses that are formed during brain development. This chain is Reticulon-4 receptor (Rtn4r), found in Rattus norvegicus (Rat).